A 183-amino-acid chain; its full sequence is Shikimate kinase (183 aa).

ATP is bound at residue 15–20; it reads GSGKST. S19 lines the Mg(2+) pocket. The substrate site is built by D37, R61, and G85. Position 123 (R123) interacts with ATP. R142 is a substrate binding site.

Belongs to the shikimate kinase family. As to quaternary structure, monomer. Requires Mg(2+) as cofactor.

The protein localises to the cytoplasm. The catalysed reaction is shikimate + ATP = 3-phosphoshikimate + ADP + H(+). It participates in metabolic intermediate biosynthesis; chorismate biosynthesis; chorismate from D-erythrose 4-phosphate and phosphoenolpyruvate: step 5/7. Functionally, catalyzes the specific phosphorylation of the 3-hydroxyl group of shikimic acid using ATP as a cosubstrate. The polypeptide is Shikimate kinase (Paracidovorax citrulli (strain AAC00-1) (Acidovorax citrulli)).